The chain runs to 372 residues: Glutamate 5-kinase (372 aa).

An ATP-binding site is contributed by lysine 14. The substrate site is built by serine 54, aspartate 141, and asparagine 153. ATP is bound by residues 173-174 and 215-221; these read TD and TGGMATK. The region spanning 280 to 358 is the PUA domain; sequence RGQLVIDAGA…DSIEEVLGYD (79 aa).

It belongs to the glutamate 5-kinase family.

Its subcellular location is the cytoplasm. It catalyses the reaction L-glutamate + ATP = L-glutamyl 5-phosphate + ADP. Its pathway is amino-acid biosynthesis; L-proline biosynthesis; L-glutamate 5-semialdehyde from L-glutamate: step 1/2. In terms of biological role, catalyzes the transfer of a phosphate group to glutamate to form L-glutamate 5-phosphate. In Shewanella pealeana (strain ATCC 700345 / ANG-SQ1), this protein is Glutamate 5-kinase.